The chain runs to 963 residues: MLSGERKEGGSPRFGKLHLPVGLWINSPRKQLAKLGRRWPSAASVKSSSSDTGSRSSEPLPPPPPHVELRRVGAVKAAGGASGSRAKRISQLFRGSGTGTTGSSGAGGPGTPGGAQRWASEKKLPELAAGVAPEPPLATRATAPPGVLKIFGAGLASGANYKSVLATARSTARELVAEALERYGLAGSPGGGPGESSCVDAFALCDALGRPAAAGVGSGEWRAEHLRVLGDSERPLLVQELWRARPGWARRFELRGREEARRLEQEAFGAADSEGTGAPSWRPQKNRSRAASGGAALASPGPGTGSGAPAGSGGKERSENLSLRRSVSELSLQGRRRRQQERRQQALSMAPGAADAQIGTADPGDFDQLTQCLIQAPSNRPYFLLLQGYQDAQDFVVYVMTREQHVFGRGGNSSGRGGSPAPYVDTFLNAPDILPRHCTVRAGPEHPAMVRPSRGAPVTHNGCLLLREAELHPGDLLGLGEHFLFMYKDPRTGGSGPARPPWLPARPGATPPGPGWAFSCRLCGRGLQERGEALAAYLDGREPVLRFRPREEEALLGEIVRAAAAGSGDLPPLGPATLLALCVQHSARELELGHLPRLLGRLARLIKEAVWEKIKEIGDRQPENHPEGVPEVPLTPEAVSVELRPLMLWMANTTELLSFVQEKVLEMEKEADQEDPQLCNDLELCDEAMALLDEVIMCTFQQSVYYLTKTLYSTLPALLDSNPFTAGAELPGPGAELGAMPPGLRPTLGVFQAALELTSQCELHPDLVSQTFGYLFFFSNASLLNSLMERGQGRPFYQWSRAVQIRTNLDLVLDWLQGAGLGDIATEFFRKLSMAVNLLCVPRTSLLKASWSSLRTDHPTLTPAQLHHLLSHYQLGPGRGPPAAWDPPPAEREAVDTGDIFESFSSHPPLILPLGSSRLRLTGPVTDDALHRELRRLRRLLWDLEQQELPANYRHGPPVATSP.

Residues 1–10 are compositionally biased toward basic and acidic residues; that stretch reads MLSGERKEGG. 2 disordered regions span residues 1–22 and 35–118; these read MLSGERKEGGSPRFGKLHLPVG and LGRR…AQRW. Over residues 41-57 the composition is skewed to low complexity; sequence SAASVKSSSSDTGSRSS. The residue at position 94 (arginine 94) is an Omega-N-methylarginine. Residues 96 to 113 are compositionally biased toward gly residues; sequence SGTGTTGSSGAGGPGTPG. The Ras-associating domain maps to 144 to 259; sequence PPGVLKIFGA…RRFELRGREE (116 aa). A phosphoserine mark is found at serine 188, serine 280, and serine 292. Residues 267–356 are disordered; it reads AFGAADSEGT…LSMAPGAADA (90 aa). Low complexity predominate over residues 290–301; sequence AASGGAALASPG. Residues 302-313 show a composition bias toward gly residues; sequence PGTGSGAPAGSG. Positions 320 to 333 are enriched in low complexity; sequence NLSLRRSVSELSLQ. Phosphoserine is present on residues serine 326, serine 328, serine 331, and serine 419. Residues 600–897 form the Dilute domain; it reads GRLARLIKEA…PPAEREAVDT (298 aa).

Interacts with Ras family members that have been activated by GTP binding. Interacts with HRAS, RAP1A, RAP2, RRAS, RAF1 and RRAS2. Interacts with MYH9 and ARHGAP29. Highly expressed in heart. Detected at lower levels in placenta and pancreas.

The protein resides in the cytoplasm. It localises to the perinuclear region. Its subcellular location is the golgi apparatus. The protein localises to the golgi stack. Functionally, required for the proper formation of vascular structures that develop via both vasculogenesis and angiogenesis. Acts as a critical and vascular-specific regulator of GTPase signaling, cell architecture, and adhesion, which is essential for endothelial cell morphogenesis and blood vessel tubulogenesis. Regulates the activity of Rho GTPases in part by recruiting ARHGAP29 and suppressing RhoA signaling and dampening ROCK and MYH9 activities in endothelial cells. May act as effector for Golgi-bound HRAS and other Ras-like proteins. May promote HRAS-mediated transformation. Negative regulator of amino acid starvation-induced autophagy. The chain is Ras-interacting protein 1 (RASIP1) from Homo sapiens (Human).